We begin with the raw amino-acid sequence, 239 residues long: MARGCLCCLKYMMFLFNLIFWLCGCGLLGVGIWLSVSQGNFATFSPSFPSLSAANLVIAIGTIVMVTGFLGCLGAIKENKCLLLSFFIILLIILLAELILLILFFVYMDKVNENAKQDLKDGLLLYNTENNVGLKNAWNIIQAEMHCCGVTDYTDWYPVLGENTVPDRCCMENSQDCGHNSTSLVWKTGCYEKVKMWFDDNKHVLGTIGMCILIIQILGMAFSMTLFQQIHRTGKKYDA.

At 1-13 (MARGCLCCLKYMM) the chain is on the cytoplasmic side. A helical membrane pass occupies residues 14-34 (FLFNLIFWLCGCGLLGVGIWL). Residues 35-55 (SVSQGNFATFSPSFPSLSAAN) are Extracellular-facing. Residues 56 to 76 (LVIAIGTIVMVTGFLGCLGAI) traverse the membrane as a helical segment. Residues 77-85 (KENKCLLLS) lie on the Cytoplasmic side of the membrane. A helical membrane pass occupies residues 86–106 (FFIILLIILLAELILLILFFV). The Extracellular portion of the chain corresponds to 107–203 (YMDKVNENAK…VKMWFDDNKH (97 aa)). N-linked (GlcNAc...) asparagine glycosylation is present at asparagine 180. Residues 204–224 (VLGTIGMCILIIQILGMAFSM) traverse the membrane as a helical segment. The Cytoplasmic portion of the chain corresponds to 225 to 239 (TLFQQIHRTGKKYDA).

The protein belongs to the tetraspanin (TM4SF) family.

The protein resides in the membrane. This Xenopus tropicalis (Western clawed frog) protein is Tetraspanin-9 (tspan9).